The sequence spans 357 residues: uncharacterized protein (357 aa).

This is an uncharacterized protein from Mycoplasma pneumoniae (strain ATCC 29342 / M129 / Subtype 1) (Mycoplasmoides pneumoniae).